A 617-amino-acid chain; its full sequence is Probable Xaa-Pro aminopeptidase P (617 aa).

4 residues coordinate Mn(2+): Asp-414, Asp-425, Glu-523, and Glu-537.

It belongs to the peptidase M24B family. The cofactor is Mn(2+).

The enzyme catalyses Release of any N-terminal amino acid, including proline, that is linked to proline, even from a dipeptide or tripeptide.. In terms of biological role, catalyzes the removal of a penultimate prolyl residue from the N-termini of peptides. The chain is Probable Xaa-Pro aminopeptidase P (AMPP) from Colletotrichum graminicola (strain M1.001 / M2 / FGSC 10212) (Maize anthracnose fungus).